Consider the following 147-residue polypeptide: Prefoldin subunit alpha (147 aa).

The protein belongs to the prefoldin alpha subunit family. As to quaternary structure, heterohexamer of two alpha and four beta subunits.

The protein localises to the cytoplasm. In terms of biological role, molecular chaperone capable of stabilizing a range of proteins. Seems to fulfill an ATP-independent, HSP70-like function in archaeal de novo protein folding. This Methanocorpusculum labreanum (strain ATCC 43576 / DSM 4855 / Z) protein is Prefoldin subunit alpha.